Consider the following 109-residue polypeptide: Nucleoid-associated protein LJ_0424 (109 aa).

This sequence belongs to the YbaB/EbfC family. Homodimer.

The protein localises to the cytoplasm. It localises to the nucleoid. Functionally, binds to DNA and alters its conformation. May be involved in regulation of gene expression, nucleoid organization and DNA protection. This Lactobacillus johnsonii (strain CNCM I-12250 / La1 / NCC 533) protein is Nucleoid-associated protein LJ_0424.